The sequence spans 467 residues: 3-isopropylmalate dehydratase large subunit (467 aa).

Cys-348, Cys-409, and Cys-412 together coordinate [4Fe-4S] cluster.

This sequence belongs to the aconitase/IPM isomerase family. LeuC type 1 subfamily. In terms of assembly, heterodimer of LeuC and LeuD. It depends on [4Fe-4S] cluster as a cofactor.

It carries out the reaction (2R,3S)-3-isopropylmalate = (2S)-2-isopropylmalate. The protein operates within amino-acid biosynthesis; L-leucine biosynthesis; L-leucine from 3-methyl-2-oxobutanoate: step 2/4. In terms of biological role, catalyzes the isomerization between 2-isopropylmalate and 3-isopropylmalate, via the formation of 2-isopropylmaleate. The polypeptide is 3-isopropylmalate dehydratase large subunit (Thiobacillus denitrificans (strain ATCC 25259 / T1)).